A 337-amino-acid polypeptide reads, in one-letter code: Phenylalanine--tRNA ligase alpha subunit (337 aa).

Residue glutamate 258 participates in Mg(2+) binding.

This sequence belongs to the class-II aminoacyl-tRNA synthetase family. Phe-tRNA synthetase alpha subunit type 1 subfamily. Tetramer of two alpha and two beta subunits. Requires Mg(2+) as cofactor.

The protein resides in the cytoplasm. It catalyses the reaction tRNA(Phe) + L-phenylalanine + ATP = L-phenylalanyl-tRNA(Phe) + AMP + diphosphate + H(+). The sequence is that of Phenylalanine--tRNA ligase alpha subunit from Burkholderia cenocepacia (strain ATCC BAA-245 / DSM 16553 / LMG 16656 / NCTC 13227 / J2315 / CF5610) (Burkholderia cepacia (strain J2315)).